We begin with the raw amino-acid sequence, 339 residues long: Ectoine/5-hydroxyectoine-binding periplasmic protein UehA (339 aa).

The first 20 residues, 1-20, serve as a signal peptide directing secretion; it reads MAQSITFTFGAVAAAGIALA. The L-ectoine site is built by glutamate 36, arginine 171, asparagine 211, phenylalanine 215, and phenylalanine 236. Residues cysteine 162 and cysteine 303 are joined by a disulfide bond.

The protein belongs to the bacterial solute-binding protein 7 family. Monomer. The complex comprises the extracytoplasmic solute receptor protein UehA, and the two transmembrane proteins UehB and UehC.

Its subcellular location is the periplasm. Part of the tripartite ATP-independent periplasmic (TRAP) transport system UehABC, which imports both ectoine and 5-hydroxyectoine as nutrients, and not as osmoprotectants. UehA binds both ectoine and 5-hydroxyectoine with high specificity and affinity. This chain is Ectoine/5-hydroxyectoine-binding periplasmic protein UehA, found in Ruegeria pomeroyi (strain ATCC 700808 / DSM 15171 / DSS-3) (Silicibacter pomeroyi).